The chain runs to 53 residues: Insulin (53 aa).

Positions aspartate 1–leucine 30 are cleaved as a propeptide — c peptide. Cysteine 38 and cysteine 43 are disulfide-bonded.

Belongs to the insulin family. As to quaternary structure, heterodimer of a B chain and an A chain linked by two disulfide bonds.

It is found in the secreted. Insulin decreases blood glucose concentration. It increases cell permeability to monosaccharides, amino acids and fatty acids. It accelerates glycolysis, the pentose phosphate cycle, and glycogen synthesis in liver. The sequence is that of Insulin (ins) from Anguilla anguilla (European freshwater eel).